A 24-amino-acid chain; its full sequence is Cytochrome c oxidase subunit 5A-2, mitochondrial (24 aa).

It belongs to the cytochrome c oxidase subunit 5A family. In terms of assembly, component of the cytochrome c oxidase (complex IV, CIV), a multisubunit enzyme composed of 14 subunits. The complex is composed of a catalytic core of 3 subunits MT-CO1, MT-CO2 and MT-CO3, encoded in the mitochondrial DNA, and 11 supernumerary subunits COX4I, COX5A, COX5B, COX6A, COX6B, COX6C, COX7A, COX7B, COX7C, COX8 and NDUFA4, which are encoded in the nuclear genome. The complex exists as a monomer or a dimer and forms supercomplexes (SCs) in the inner mitochondrial membrane with NADH-ubiquinone oxidoreductase (complex I, CI) and ubiquinol-cytochrome c oxidoreductase (cytochrome b-c1 complex, complex III, CIII), resulting in different assemblies (supercomplex SCI(1)III(2)IV(1) and megacomplex MCI(2)III(2)IV(2)).

The protein resides in the mitochondrion inner membrane. Its pathway is energy metabolism; oxidative phosphorylation. Functionally, component of the cytochrome c oxidase, the last enzyme in the mitochondrial electron transport chain which drives oxidative phosphorylation. The respiratory chain contains 3 multisubunit complexes succinate dehydrogenase (complex II, CII), ubiquinol-cytochrome c oxidoreductase (cytochrome b-c1 complex, complex III, CIII) and cytochrome c oxidase (complex IV, CIV), that cooperate to transfer electrons derived from NADH and succinate to molecular oxygen, creating an electrochemical gradient over the inner membrane that drives transmembrane transport and the ATP synthase. Cytochrome c oxidase is the component of the respiratory chain that catalyzes the reduction of oxygen to water. Electrons originating from reduced cytochrome c in the intermembrane space (IMS) are transferred via the dinuclear copper A center (CU(A)) of subunit 2 and heme A of subunit 1 to the active site in subunit 1, a binuclear center (BNC) formed by heme A3 and copper B (CU(B)). The BNC reduces molecular oxygen to 2 water molecules using 4 electrons from cytochrome c in the IMS and 4 protons from the mitochondrial matrix. This Thunnus obesus (Bigeye tuna) protein is Cytochrome c oxidase subunit 5A-2, mitochondrial.